The sequence spans 288 residues: Putative sugar uptake protein gbs2116 (288 aa).

10 helical membrane-spanning segments follow: residues 4–26 (LLIALIPMFAWGSIGFVSNKIGG), 33–50 (FGMTLGALLFAIIVWLFK), 55–72 (TASLWIFGILGGILWSVG), 85–107 (VSVANPLSSGAQLVGGSLVGALV), 117–134 (FILGLTALTLLVIGFYFS), 154–171 (FATIAYSTVGYISYAVLF), 181–200 (AVILPMAVGMCLGAICFMKF), 207–229 (VVVKNMITGLMWGVGNVFMLLAA), 234–256 (LAIAFSFSQLGVIISIIGGILFL), and 268–285 (VVMGILCFVMGAILLGIV).

Belongs to the GRP transporter (TC 2.A.7.5) family.

Its subcellular location is the cell membrane. This Streptococcus agalactiae serotype III (strain NEM316) protein is Putative sugar uptake protein gbs2116.